A 171-amino-acid polypeptide reads, in one-letter code: uncharacterized protein (171 aa).

Positions 123-171 are disordered; the sequence is CTKRDLRNDPPPAYQPDDPLKDLRKNFEKKEKPTWNDVEKKKNGVFEFH. The segment covering 140–171 has biased composition (basic and acidic residues); it reads DPLKDLRKNFEKKEKPTWNDVEKKKNGVFEFH.

This is an uncharacterized protein from Caenorhabditis elegans.